The sequence spans 370 residues: Spermidine/putrescine import ATP-binding protein PotA (370 aa).

The region spanning 6-236 (IELHQVTKRY…PINHFVADFI (231 aa)) is the ABC transporter domain. Position 38-45 (38-45 (GPSGCGKT)) interacts with ATP.

This sequence belongs to the ABC transporter superfamily. Spermidine/putrescine importer (TC 3.A.1.11.1) family. As to quaternary structure, the complex is composed of two ATP-binding proteins (PotA), two transmembrane proteins (PotB and PotC) and a solute-binding protein (PotD).

It localises to the cell membrane. The enzyme catalyses ATP + H2O + polyamine-[polyamine-binding protein]Side 1 = ADP + phosphate + polyamineSide 2 + [polyamine-binding protein]Side 1.. Part of the ABC transporter complex PotABCD involved in spermidine/putrescine import. Responsible for energy coupling to the transport system. This Levilactobacillus brevis (strain ATCC 367 / BCRC 12310 / CIP 105137 / JCM 1170 / LMG 11437 / NCIMB 947 / NCTC 947) (Lactobacillus brevis) protein is Spermidine/putrescine import ATP-binding protein PotA.